The primary structure comprises 200 residues: Putative 3-methyladenine DNA glycosylase (200 aa).

This sequence belongs to the DNA glycosylase MPG family.

In Shouchella clausii (strain KSM-K16) (Alkalihalobacillus clausii), this protein is Putative 3-methyladenine DNA glycosylase.